The chain runs to 261 residues: Lytic polysaccharide monooxygenase-like protein X325 (261 aa).

A signal peptide spans 1-17; that stretch reads MQLSALALATLLATANA. The Cu(2+) site is built by histidine 18, histidine 64, and aspartate 133. Disulfide bonds link cysteine 39–cysteine 139 and cysteine 108–cysteine 155. 2 N-linked (GlcNAc...) asparagine glycosylation sites follow: asparagine 157 and asparagine 183. Residues 174–210 form a disordered region; that stretch reads LAENTQGSGNSSGHAHGSSGSGSASASKTDSKSSAAS. Over residues 180-210 the composition is skewed to low complexity; it reads GSGNSSGHAHGSSGSGSASASKTDSKSSAAS. Asparagine 238 is lipidated: GPI-anchor amidated asparagine. Positions 239 to 261 are cleaved as a propeptide — removed in mature form; sequence SGSLAYVNGALAIGGVVAAALLI.

The protein belongs to the X325 family. Cu(2+) is required as a cofactor.

The protein localises to the cell membrane. Its function is as follows. Lytic polysaccharide monooxygenase-like protein that has diverged to biological functions other than polysaccharide degradation since it does not perform oxidative cleavage of polysaccharides. Acts as a cell surface-bound protein that functions in the copper-accumulation pathway. The protein is Lytic polysaccharide monooxygenase-like protein X325 of Yarrowia lipolytica (strain CLIB 122 / E 150) (Yeast).